We begin with the raw amino-acid sequence, 157 residues long: Cyclic pyranopterin monophosphate synthase (157 aa).

Substrate contacts are provided by residues 74-76 (MCH) and 112-113 (ME). Residue Asp127 is part of the active site.

This sequence belongs to the MoaC family. Homohexamer; trimer of dimers.

It carries out the reaction (8S)-3',8-cyclo-7,8-dihydroguanosine 5'-triphosphate = cyclic pyranopterin phosphate + diphosphate. It participates in cofactor biosynthesis; molybdopterin biosynthesis. Its function is as follows. Catalyzes the conversion of (8S)-3',8-cyclo-7,8-dihydroguanosine 5'-triphosphate to cyclic pyranopterin monophosphate (cPMP). This Campylobacter jejuni subsp. jejuni serotype O:23/36 (strain 81-176) protein is Cyclic pyranopterin monophosphate synthase.